A 915-amino-acid polypeptide reads, in one-letter code: Probable LRR receptor-like serine/threonine-protein kinase At2g16250 (915 aa).

The first 28 residues, 1–28 (MVDQRRSALGFVLLLLCLVLFFDCVVVG), serve as a signal peptide directing secretion. Residues 29 to 451 (QTQSRFSEKL…ISRRTVIILA (423 aa)) are Extracellular-facing. Residues Asn71, Asn78, Asn101, Asn109, Asn150, Asn158, and Asn177 are each glycosylated (N-linked (GlcNAc...) asparagine). 11 LRR repeats span residues 102–125 (LTRL…WFGV), 127–150 (LLAL…TLGN), 151–174 (LTSL…SLGQ), 176–198 (LNLS…SFSS), 199–223 (LKNL…LGAL), 225–247 (KLIH…LGDL), 248–271 (VNLV…LRKL), 272–295 (SKLQ…LFSA), 297–320 (SQLQ…CWSL), 321–344 (PKLR…SYDS), and 366–390 (LRRF…VTGE). An N-linked (GlcNAc...) asparagine glycan is attached at Asn230. Asn332 carries N-linked (GlcNAc...) asparagine glycosylation. N-linked (GlcNAc...) asparagine glycans are attached at residues Asn391, Asn429, and Asn437. Residues 452–472 (AVGGGVAFILLFVILPIILVL) form a helical membrane-spanning segment. Over 473-915 (CMRHRRRAAQ…AAYGVVEDNL (443 aa)) the chain is Cytoplasmic. Positions 482-503 (QRGNNDRPKPAGEASQQPPKGA) are disordered. In terms of domain architecture, Protein kinase spans 527 to 811 (FNDANLIKRG…IVNALENPLK (285 aa)). ATP is bound by residues 533-541 (IKRGHSGNL) and Lys555. Asp657 acts as the Proton acceptor in catalysis. Residues 851–915 (TAVQAGATTS…AAYGVVEDNL (65 aa)) are disordered. Residues 859–870 (TSGGGGGGGGNG) are compositionally biased toward gly residues. The segment covering 871-892 (LRNSGSQGSSGRNNNNNGNSSS) has biased composition (low complexity).

Belongs to the protein kinase superfamily. Ser/Thr protein kinase family.

It localises to the membrane. The enzyme catalyses L-seryl-[protein] + ATP = O-phospho-L-seryl-[protein] + ADP + H(+). It carries out the reaction L-threonyl-[protein] + ATP = O-phospho-L-threonyl-[protein] + ADP + H(+). This chain is Probable LRR receptor-like serine/threonine-protein kinase At2g16250, found in Arabidopsis thaliana (Mouse-ear cress).